Here is a 396-residue protein sequence, read N- to C-terminus: Flavohemoprotein (396 aa).

In terms of domain architecture, Globin spans 1–136; sequence MLDAQTIATV…LANVFINREA (136 aa). His85 serves as a coordination point for heme b. Residues Tyr95 and Glu135 each act as charge relay system in the active site. Residues 147–396 are reductase; sequence GGWEGTRDFR…YECFGPHKVL (250 aa). The 106-residue stretch at 150-255 folds into the FAD-binding FR-type domain; that stretch reads EGTRDFRIVA…VAPAGDFFMA (106 aa). FAD-binding positions include Tyr188 and 204–207; that span reads RQYS. NADP(+) is bound at residue 268–273; that stretch reads GVGQTP. 389–392 serves as a coordination point for FAD; sequence CFGP.

It belongs to the globin family. Two-domain flavohemoproteins subfamily. This sequence in the C-terminal section; belongs to the flavoprotein pyridine nucleotide cytochrome reductase family. Monomer. The cofactor is FAD. Requires heme b as cofactor.

Its subcellular location is the cytoplasm. It carries out the reaction 2 nitric oxide + NADPH + 2 O2 = 2 nitrate + NADP(+) + H(+). The catalysed reaction is 2 nitric oxide + NADH + 2 O2 = 2 nitrate + NAD(+) + H(+). In terms of biological role, is involved in NO detoxification in an aerobic process, termed nitric oxide dioxygenase (NOD) reaction that utilizes O(2) and NAD(P)H to convert NO to nitrate, which protects the bacterium from various noxious nitrogen compounds. Therefore, plays a central role in the inducible response to nitrosative stress. In the presence of oxygen and NADH, HMP has NADH oxidase activity, which leads to the generation of superoxide and H(2)O(2), both in vitro and in vivo, and it has been suggested that HMP might act as an amplifier of superoxide stress. Under anaerobic conditions, HMP also exhibits nitric oxide reductase and FAD reductase activities. However, all these reactions are much lower than NOD activity. Its function is as follows. Various electron acceptors are also reduced by HMP in vitro, including dihydropterine, ferrisiderophores, ferric citrate, cytochrome c, nitrite, S-nitrosoglutathione, and alkylhydroperoxides. However, it is unknown if these reactions are of any biological significance in vivo. The polypeptide is Flavohemoprotein (hmp) (Escherichia coli (strain K12)).